Here is a 345-residue protein sequence, read N- to C-terminus: Phosphoribosylformylglycinamidine cyclo-ligase (345 aa).

It belongs to the AIR synthase family.

It is found in the cytoplasm. The enzyme catalyses 2-formamido-N(1)-(5-O-phospho-beta-D-ribosyl)acetamidine + ATP = 5-amino-1-(5-phospho-beta-D-ribosyl)imidazole + ADP + phosphate + H(+). The protein operates within purine metabolism; IMP biosynthesis via de novo pathway; 5-amino-1-(5-phospho-D-ribosyl)imidazole from N(2)-formyl-N(1)-(5-phospho-D-ribosyl)glycinamide: step 2/2. The protein is Phosphoribosylformylglycinamidine cyclo-ligase of Ligilactobacillus salivarius (strain UCC118) (Lactobacillus salivarius).